Here is a 432-residue protein sequence, read N- to C-terminus: Anaerobic glycerol-3-phosphate dehydrogenase subunit B (432 aa).

It belongs to the anaerobic G-3-P dehydrogenase subunit B family. As to quaternary structure, composed of a catalytic GlpA/B dimer and of membrane bound GlpC. The cofactor is FMN.

The catalysed reaction is a quinone + sn-glycerol 3-phosphate = dihydroxyacetone phosphate + a quinol. It participates in polyol metabolism; glycerol degradation via glycerol kinase pathway; glycerone phosphate from sn-glycerol 3-phosphate (anaerobic route): step 1/1. Functionally, conversion of glycerol 3-phosphate to dihydroxyacetone. Uses fumarate or nitrate as electron acceptor. This chain is Anaerobic glycerol-3-phosphate dehydrogenase subunit B, found in Histophilus somni (strain 129Pt) (Haemophilus somnus).